We begin with the raw amino-acid sequence, 94 residues long: MESRDVILRPVITEASMAELDNKRYTFDVDTRATKSQIKDAVEDIFEVKVAKVNVMNVKGKKKRMGRYEGYTKKRRKAIVTLTAESKEIKLFEE.

Belongs to the universal ribosomal protein uL23 family. Part of the 50S ribosomal subunit. Contacts protein L29, and trigger factor when it is bound to the ribosome.

One of the early assembly proteins it binds 23S rRNA. One of the proteins that surrounds the polypeptide exit tunnel on the outside of the ribosome. Forms the main docking site for trigger factor binding to the ribosome. The polypeptide is Large ribosomal subunit protein uL23 (Ligilactobacillus salivarius (strain UCC118) (Lactobacillus salivarius)).